The following is a 446-amino-acid chain: Probable D-serine dehydratase (446 aa).

At Lys-116 the chain carries N6-(pyridoxal phosphate)lysine.

This sequence belongs to the serine/threonine dehydratase family. DsdA subfamily. Pyridoxal 5'-phosphate is required as a cofactor.

The catalysed reaction is D-serine = pyruvate + NH4(+). This chain is Probable D-serine dehydratase, found in Bacillus thuringiensis subsp. konkukian (strain 97-27).